The sequence spans 165 residues: Transcriptional repressor NrdR (165 aa).

The segment at 3-34 (CPFCRNPDSRVVDSRMADDGSAIRRRRQCPEC) is a zinc-finger region. The region spanning 46–136 (LTVIKRSGVG…VYQAFESLED (91 aa)) is the ATP-cone domain.

The protein belongs to the NrdR family. The cofactor is Zn(2+).

In terms of biological role, negatively regulates transcription of bacterial ribonucleotide reductase nrd genes and operons by binding to NrdR-boxes. The sequence is that of Transcriptional repressor NrdR from Arthrobacter sp. (strain FB24).